A 493-amino-acid polypeptide reads, in one-letter code: 3-octaprenyl-4-hydroxybenzoate carboxy-lyase (493 aa).

Asparagine 172 contacts Mn(2+). Residues 175–177, 189–191, and 194–195 contribute to the prenylated FMN site; these read IYR, RWL, and RG. Glutamate 238 lines the Mn(2+) pocket. The active-site Proton donor is aspartate 287.

Belongs to the UbiD family. As to quaternary structure, homohexamer. Prenylated FMN is required as a cofactor. It depends on Mn(2+) as a cofactor.

The protein resides in the cell membrane. It carries out the reaction a 4-hydroxy-3-(all-trans-polyprenyl)benzoate + H(+) = a 2-(all-trans-polyprenyl)phenol + CO2. Its pathway is cofactor biosynthesis; ubiquinone biosynthesis. Its function is as follows. Catalyzes the decarboxylation of 3-octaprenyl-4-hydroxy benzoate to 2-octaprenylphenol, an intermediate step in ubiquinone biosynthesis. This is 3-octaprenyl-4-hydroxybenzoate carboxy-lyase from Shewanella baltica (strain OS155 / ATCC BAA-1091).